The primary structure comprises 116 residues: MRHQCRVPKLGRPTDQRKAMLRGLTTQLIREGRVTTTKARAKALRDEAERMITLAKNGSLASRRRAIGYIYDKQLVHALFDKAQDRYGDRQGGYTRIIRTVPRRGDNAEMAIIELV.

Belongs to the bacterial ribosomal protein bL17 family. In terms of assembly, part of the 50S ribosomal subunit. Contacts protein L32.

The protein is Large ribosomal subunit protein bL17 of Prochlorococcus marinus (strain MIT 9303).